Here is a 321-residue protein sequence, read N- to C-terminus: Sideroflexin-3 (321 aa).

Met1 bears the N-acetylmethionine mark. 4 helical membrane passes run Leu146–Leu164, Leu174–Leu194, Ile225–Val245, and Leu266–Phe286.

The protein belongs to the sideroflexin family. Widely expressed.

The protein resides in the mitochondrion membrane. The catalysed reaction is L-serine(in) = L-serine(out). Mitochondrial serine transporter that mediates transport of serine into mitochondria, an important step of the one-carbon metabolism pathway. Mitochondrial serine is converted to glycine and formate, which then exits to the cytosol where it is used to generate the charged folates that serve as one-carbon donors. This Mus musculus (Mouse) protein is Sideroflexin-3.